Here is a 244-residue protein sequence, read N- to C-terminus: Acidic leucine-rich nuclear phosphoprotein 32 family member A (244 aa).

LRR repeat units follow at residues 18–41 (DVKELVLDNCRSKEGKIEGLTDEF), 43–64 (GLEFLSTINVCLSSIANLPKLN), 65–87 (KLKKLELSDNNISGGLEVLAEKC), and 89–110 (NLTHLNLSGNRIKDLSTIEPLK). Positions 123–161 (CEVTNLNDYRENLFKLLPQLTYLDGYDRDDKEAPDSDAE) constitute an LRRCT domain. The interval 148–244 (YDRDDKEAPD…DQDDEGEDDD (97 aa)) is disordered. Positions 157–227 (DSDAEGYVEG…EEDEGDEEAE (71 aa)) are enriched in acidic residues.

This sequence belongs to the ANP32 family. Phosphorylated on serine residues.

The protein resides in the nucleus. It localises to the cytoplasm. The protein localises to the endoplasmic reticulum. Implicated in a number of cellular processes, including proliferation, differentiation, caspase-dependent and caspase-independent apoptosis, suppression of transformation (tumor suppressor), inhibition of protein phosphatase 2A, regulation of mRNA trafficking and stability, and inhibition of acetyltransferases as part of the INHAT (inhibitor of histone acetyltransferases) complex. In Xenopus laevis (African clawed frog), this protein is Acidic leucine-rich nuclear phosphoprotein 32 family member A (anp32a).